The sequence spans 233 residues: Nuclear speckle RNA-binding protein A (233 aa).

Disordered regions lie at residues M1–T54, V68–V92, and F214–R233. The segment covering G71–N91 has biased composition (gly residues). In terms of domain architecture, RRM spans N136–K222.

As to expression, expressed in root meristems, lateral root primordia and root vascular tissues.

Its subcellular location is the nucleus speckle. In terms of biological role, alternative splicing (AS) regulator that binds to specific mRNAs and modulates auxin effects on the transcriptome. Displaced from its targets upon binding to AS competitor long non-coding RNA (ASCO-RNA). In Arabidopsis thaliana (Mouse-ear cress), this protein is Nuclear speckle RNA-binding protein A.